Reading from the N-terminus, the 678-residue chain is DNA ligase (678 aa).

Residues 36 to 40 (DVVYD), 85 to 86 (SL), and Glu117 contribute to the NAD(+) site. The active-site N6-AMP-lysine intermediate is Lys119. Residues Arg140, Glu177, Lys294, and Lys318 each coordinate NAD(+). Cys412, Cys415, Cys430, and Cys435 together coordinate Zn(2+). The BRCT domain maps to 598–678 (ISSTPLAGKT…QLLKMINPQE (81 aa)).

The protein belongs to the NAD-dependent DNA ligase family. LigA subfamily. The cofactor is Mg(2+). Mn(2+) serves as cofactor.

It catalyses the reaction NAD(+) + (deoxyribonucleotide)n-3'-hydroxyl + 5'-phospho-(deoxyribonucleotide)m = (deoxyribonucleotide)n+m + AMP + beta-nicotinamide D-nucleotide.. In terms of biological role, DNA ligase that catalyzes the formation of phosphodiester linkages between 5'-phosphoryl and 3'-hydroxyl groups in double-stranded DNA using NAD as a coenzyme and as the energy source for the reaction. It is essential for DNA replication and repair of damaged DNA. This chain is DNA ligase, found in Gloeothece citriformis (strain PCC 7424) (Cyanothece sp. (strain PCC 7424)).